The primary structure comprises 389 residues: Probable nitrate transporter NarT (389 aa).

12 consecutive transmembrane segments (helical) span residues 14–34, 45–65, 69–89, 97–117, 139–159, 161–181, 211–231, 246–266, 268–288, 294–314, 331–351, and 353–373; these read TLSLVVGFMAWSIIAPLMPFI, ISIILAIPVILGSVLRVPFGY, IVGAKWVFFTSFIVLLFPIFF, GMLMASGFFLGVGGAIFSVGV, GNIGTAVSSFLAPPIAGIIGW, TTVRSYLIIIALFALIMFIFG, WYFITFGAFVAFGIFLPNYLV, GVFIALATFLRPIGGILGDKF, AVKVLMIDFVIMIIGAVILGI, LFTVGCLTISICAGIGNGLIF, IVSMMGGLGGFFPPLVITYVA, and LTGSSHLAFIFLAVFGCIALF.

This sequence belongs to the major facilitator superfamily. Nitrate/nitrite porter (TC 2.A.1.8) family.

It localises to the cell membrane. Functionally, probably required for nitrate uptake under anoxic conditions. Also possibly involved in excretion of nitrite produced by the dissimilatory reduction of nitrate. This Staphylococcus aureus (strain MRSA252) protein is Probable nitrate transporter NarT (narT).